The primary structure comprises 1087 residues: Exportin-7-A (1087 aa).

One can recognise an Importin N-terminal domain in the interval 30 to 96 (AEKALVEFTN…RNYVLTYLAT (67 aa)).

The protein belongs to the exportin family. Expressed in oocytes (at protein level).

It localises to the cytoplasm. The protein resides in the nucleus. In terms of biological role, mediates the nuclear export of proteins (cargos) with broad substrate specificity. This is Exportin-7-A (xpo7-a) from Xenopus laevis (African clawed frog).